The following is a 262-amino-acid chain: MQPDLHSRALAAHTLQQFRILSPLTHCMTNDVVQNFTANTLLASGASPAMVIEPEEARQFAAIASALLINVGTLTRSRAEAMRAATEQAHIAKTPWTLDPVAVGALDYRRRFCLELLSLKPRAIRGNASEILALAGLAAGGRGVDTTDTAVSALPAAQALARQTGAVVAVTGEVDYVTDGQRTVSVTGGDVLMTRVVGTGCALSAVVAASCALPGNTLDNVASACSWMKQAGQSAAERSQGPGSFIPAFLDALYHLNAEEQV.

Met-50 provides a ligand contact to substrate. Arg-125 and Thr-171 together coordinate ATP. Gly-198 is a binding site for substrate.

It belongs to the Thz kinase family. Mg(2+) is required as a cofactor.

It catalyses the reaction 5-(2-hydroxyethyl)-4-methylthiazole + ATP = 4-methyl-5-(2-phosphooxyethyl)-thiazole + ADP + H(+). The protein operates within cofactor biosynthesis; thiamine diphosphate biosynthesis; 4-methyl-5-(2-phosphoethyl)-thiazole from 5-(2-hydroxyethyl)-4-methylthiazole: step 1/1. Catalyzes the phosphorylation of the hydroxyl group of 4-methyl-5-beta-hydroxyethylthiazole (THZ). The chain is Hydroxyethylthiazole kinase from Citrobacter koseri (strain ATCC BAA-895 / CDC 4225-83 / SGSC4696).